The following is a 241-amino-acid chain: LexA repressor (241 aa).

The H-T-H motif DNA-binding region spans 41–61; it reads FREIGNAAGLKSPSSVKHQLQ. Catalysis depends on for autocatalytic cleavage activity residues Ser165 and Lys202.

This sequence belongs to the peptidase S24 family. As to quaternary structure, homodimer.

It carries out the reaction Hydrolysis of Ala-|-Gly bond in repressor LexA.. In terms of biological role, represses a number of genes involved in the response to DNA damage (SOS response), including recA and lexA. In the presence of single-stranded DNA, RecA interacts with LexA causing an autocatalytic cleavage which disrupts the DNA-binding part of LexA, leading to derepression of the SOS regulon and eventually DNA repair. This is LexA repressor from Bifidobacterium longum subsp. infantis (strain ATCC 15697 / DSM 20088 / JCM 1222 / NCTC 11817 / S12).